Consider the following 384-residue polypeptide: Carbazole 1,9a-dioxygenase, terminal oxygenase component CarAa (384 aa).

In terms of domain architecture, Rieske spans 29-135; that stretch reads WYPVMFSKEI…VQEAKGCVFI (107 aa). 4 residues coordinate [2Fe-2S] cluster: cysteine 69, histidine 71, cysteine 90, and histidine 93.

In terms of assembly, homotrimer. Carbazole 1,9a-dioxygenase complex consists of a terminal oxygenase component CarAa, a ferredoxin reductase component CarAd and a ferredoxin component CarAc. [2Fe-2S] cluster is required as a cofactor.

The catalysed reaction is 9H-carbazole + NADH + O2 + H(+) = 2'-aminobiphenyl-2,3-diol + NAD(+). The enzyme catalyses 9H-carbazole + NADPH + O2 + H(+) = 2'-aminobiphenyl-2,3-diol + NADP(+). Part of the multicomponent carbazole 1,9a-dioxygenase (CARDO), that converts carbazole (CAR) into 2-aminobiphenyl-2,3-diol. Catalyzes the dioxygenation at the angular (C-9a) and adjacent (C-1) positions of carbazole to yield a highly unstable cis-hydrodiol intermediate which is spontaneously converted to 2-aminobiphenyl-2,3-diol. It is also able to attack the angular position adjacent of hetero atom of heterocyclic aromatic compounds such as polychlorinated dibenzo-p-dioxin (DD) and dibenzofuran (DBF). It was also shown that CARDO has the ability to metabolize biphenyl and polycyclic aromatic hydrocarbons, such as naphthalene and phenanthrene. The protein is Carbazole 1,9a-dioxygenase, terminal oxygenase component CarAa (carAa) of Metapseudomonas resinovorans (Pseudomonas resinovorans).